The sequence spans 622 residues: Putative E3 ubiquitin-protein ligase ORTHRUS 4 (622 aa).

The segment at aspartate 12–valine 62 adopts a PHD-type zinc-finger fold. The segment at cysteine 129–arginine 169 adopts an RING-type 1 zinc-finger fold. The YDG domain maps to threonine 258–arginine 407. An RING-type 2 zinc finger spans residues cysteine 498–threonine 555. Residues glutamine 566–glutamate 602 adopt a coiled-coil conformation. Residues lysine 579–alanine 622 form a disordered region. Residues aspartate 611 to alanine 622 show a composition bias toward polar residues.

It is found in the nucleus. The enzyme catalyses S-ubiquitinyl-[E2 ubiquitin-conjugating enzyme]-L-cysteine + [acceptor protein]-L-lysine = [E2 ubiquitin-conjugating enzyme]-L-cysteine + N(6)-ubiquitinyl-[acceptor protein]-L-lysine.. The protein operates within protein modification; protein ubiquitination. Functionally, E3 ubiquitin-protein ligase. May participate in CpG methylation-dependent transcriptional regulation. The polypeptide is Putative E3 ubiquitin-protein ligase ORTHRUS 4 (ORTH4) (Arabidopsis thaliana (Mouse-ear cress)).